The sequence spans 457 residues: Argininosuccinate lyase (457 aa).

It belongs to the lyase 1 family. Argininosuccinate lyase subfamily.

It is found in the cytoplasm. The enzyme catalyses 2-(N(omega)-L-arginino)succinate = fumarate + L-arginine. Its pathway is amino-acid biosynthesis; L-arginine biosynthesis; L-arginine from L-ornithine and carbamoyl phosphate: step 3/3. This Shewanella sediminis (strain HAW-EB3) protein is Argininosuccinate lyase.